We begin with the raw amino-acid sequence, 304 residues long: UDP-3-O-acyl-N-acetylglucosamine deacetylase (304 aa).

His78, His237, and Asp241 together coordinate Zn(2+). His264 serves as the catalytic Proton donor.

Belongs to the LpxC family. It depends on Zn(2+) as a cofactor.

It catalyses the reaction a UDP-3-O-[(3R)-3-hydroxyacyl]-N-acetyl-alpha-D-glucosamine + H2O = a UDP-3-O-[(3R)-3-hydroxyacyl]-alpha-D-glucosamine + acetate. The protein operates within glycolipid biosynthesis; lipid IV(A) biosynthesis; lipid IV(A) from (3R)-3-hydroxytetradecanoyl-[acyl-carrier-protein] and UDP-N-acetyl-alpha-D-glucosamine: step 2/6. Functionally, catalyzes the hydrolysis of UDP-3-O-myristoyl-N-acetylglucosamine to form UDP-3-O-myristoylglucosamine and acetate, the committed step in lipid A biosynthesis. The sequence is that of UDP-3-O-acyl-N-acetylglucosamine deacetylase from Marinobacter nauticus (strain ATCC 700491 / DSM 11845 / VT8) (Marinobacter aquaeolei).